The primary structure comprises 215 residues: Deoxyribose-phosphate aldolase (215 aa).

The active-site Proton donor/acceptor is the D90. K152 serves as the catalytic Schiff-base intermediate with acetaldehyde. K181 functions as the Proton donor/acceptor in the catalytic mechanism.

It belongs to the DeoC/FbaB aldolase family. DeoC type 1 subfamily.

Its subcellular location is the cytoplasm. The enzyme catalyses 2-deoxy-D-ribose 5-phosphate = D-glyceraldehyde 3-phosphate + acetaldehyde. Its pathway is carbohydrate degradation; 2-deoxy-D-ribose 1-phosphate degradation; D-glyceraldehyde 3-phosphate and acetaldehyde from 2-deoxy-alpha-D-ribose 1-phosphate: step 2/2. Its function is as follows. Catalyzes a reversible aldol reaction between acetaldehyde and D-glyceraldehyde 3-phosphate to generate 2-deoxy-D-ribose 5-phosphate. This is Deoxyribose-phosphate aldolase from Ureaplasma parvum serovar 3 (strain ATCC 27815 / 27 / NCTC 11736).